Reading from the N-terminus, the 602-residue chain is Glutamine--fructose-6-phosphate aminotransferase [isomerizing] (602 aa).

Catalysis depends on C2, which acts as the Nucleophile; for GATase activity. The 221-residue stretch at 2-222 (CGIFGIIFAE…DGEYGYITAG (221 aa)) folds into the Glutamine amidotransferase type-2 domain. SIS domains follow at residues 284-422 (VANA…ALGH) and 452-592 (LAKR…PDKP). The active-site For Fru-6P isomerization activity is K597.

Homodimer.

It is found in the cytoplasm. It carries out the reaction D-fructose 6-phosphate + L-glutamine = D-glucosamine 6-phosphate + L-glutamate. Catalyzes the first step in hexosamine metabolism, converting fructose-6P into glucosamine-6P using glutamine as a nitrogen source. This Pyrobaculum aerophilum (strain ATCC 51768 / DSM 7523 / JCM 9630 / CIP 104966 / NBRC 100827 / IM2) protein is Glutamine--fructose-6-phosphate aminotransferase [isomerizing].